The following is an 893-amino-acid chain: Protein kintoun (893 aa).

Disordered regions lie at residues 211-243 (KNAT…VLPM), 372-395 (LSRE…EEAG), 587-719 (EQVH…SIDD), 781-821 (QRKK…QQTA), and 834-893 (PQNN…DEDM). Residues 214–232 (TAEEREPHPLEHTYPKKPE) show a composition bias toward basic and acidic residues. Ser-377 is subject to Phosphoserine. Residues 594-603 (QQEEEEEEEQ) show a composition bias toward acidic residues. Residues 609–626 (HQHKKGNKKQRKRNKKQR) are compositionally biased toward basic residues. A compositionally biased stretch (low complexity) spans 640–651 (QQQQHQKQQQQQ). Polar residues-rich tracts occupy residues 656–667 (ENSSPESLNAGS) and 684–694 (FSECNDSSSVQ). Residues 709-719 (SISESSSSIDD) are compositionally biased toward low complexity. Positions 781–797 (QRKKNQKRRDCKLRAQQ) are enriched in basic residues. At Ser-801 the chain carries Phosphoserine. Positions 836 to 848 (NNNNRSYSKNNKN) are enriched in low complexity. Positions 865–877 (NNEEDTKRNEADA) are enriched in basic and acidic residues. Positions 884–893 (EMDDDDDEDM) are enriched in acidic residues.

The protein belongs to the PIH1 family. Kintoun subfamily. As to quaternary structure, interacts with Pp1alpha-96A, Pp1-87B, Pp1-13C and flw.

Its subcellular location is the cytoplasm. Functionally, required for cytoplasmic pre-assembly of axonemal dyneins, thereby playing a central role in motility in cilia and flagella. Involved in pre-assembly of dynein arm complexes in the cytoplasm before intraflagellar transport loads them for the ciliary compartment. This Drosophila grimshawi (Hawaiian fruit fly) protein is Protein kintoun.